The following is a 334-amino-acid chain: Methionine adenosyltransferase 2 subunit beta (334 aa).

Residues 37–40, 60–62, 71–72, cysteine 93, arginine 97, tyrosine 159, and leucine 185 contribute to the NADP(+) site; these read TGLL, FRR, and NL. The residue at position 309 (threonine 309) is a Phosphothreonine. The interval 319 to 334 is required for interaction with MAT2A; the sequence is LWPFLIDKRWRQTVFH.

It belongs to the dTDP-4-dehydrorhamnose reductase family. MAT2B subfamily. In terms of assembly, heterotrimer; composed of a catalytic MAT2A homodimer that binds one regulatory MAT2B chain. Heterohexamer; composed of a central, catalytic MAT2A homotetramer flanked on either side by a regulatory MAT2B chain. NADP binding increases the affinity for MAT2A.

Its pathway is amino-acid biosynthesis; S-adenosyl-L-methionine biosynthesis; S-adenosyl-L-methionine from L-methionine: step 1/1. Functionally, regulatory subunit of S-adenosylmethionine synthetase 2, an enzyme that catalyzes the formation of S-adenosylmethionine from methionine and ATP. Regulates MAT2A catalytic activity by changing its kinetic properties, increasing its affinity for L-methionine. Can bind NADP (in vitro). The protein is Methionine adenosyltransferase 2 subunit beta (MAT2B) of Pongo abelii (Sumatran orangutan).